Reading from the N-terminus, the 268-residue chain is Proenkephalin-A (268 aa).

A signal peptide spans 1 to 24 (MARFLRLCTWLLVLGSCLLATVQA). Cystine bridges form between Cys26–Cys48, Cys30–Cys52, and Cys33–Cys65. The tract at residues 162–185 (GTGDNRAREGRHQESTDNDDNMSK) is disordered. Basic and acidic residues predominate over residues 166–176 (NRAREGRHQES). 2 propeptides span residues 197 to 208 (SPQVEDEAKELQ) and 218 to 228 (VGRPEWWMDYQ). Ser252 bears the Phosphoserine mark.

This sequence belongs to the opioid neuropeptide precursor family. Proenkephalin-A is cleaved by CTSL to generate Met-enkephalin. Post-translationally, processed and degraded by ACE. In terms of processing, probably cleaved by ACE. Processed by ACE to generate Met-enkephalin in the nucleus accumbens of the brain. Post-translationally, the N-terminal domain contains 6 conserved cysteines thought to be involved in disulfide bonding and/or processing.

The protein resides in the cytoplasmic vesicle. It is found in the secretory vesicle. The protein localises to the chromaffin granule lumen. Its subcellular location is the secreted. Functionally, neuropeptide that competes with and mimic the effects of opiate drugs. They play a role in a number of physiologic functions, including pain perception and responses to stress. Its function is as follows. Met-enkephalin-Arg-Phe neuropeptide acts as a strong ligand of Mu-type opioid receptor OPRM1. Met-enkephalin-Arg-Phe-binding to OPRM1 in the nucleus accumbens of the brain increases activation of OPRM1, leading to long-term synaptic depression of glutamate release. Increases glutamate release in the striatum and decreases GABA concentration in the striatum. In terms of biological role, increases glutamate release in the striatum. This Mesocricetus auratus (Golden hamster) protein is Proenkephalin-A (PENK).